The following is a 161-amino-acid chain: Phosphopantetheine adenylyltransferase (161 aa).

T9 lines the substrate pocket. ATP contacts are provided by residues 9 to 10 and H17; that span reads TF. K41, L73, and R87 together coordinate substrate. ATP is bound by residues 88 to 90, E98, and 123 to 129; these read GLR and YQFISGT.

Belongs to the bacterial CoaD family. Homohexamer. Mg(2+) is required as a cofactor.

It is found in the cytoplasm. It carries out the reaction (R)-4'-phosphopantetheine + ATP + H(+) = 3'-dephospho-CoA + diphosphate. The protein operates within cofactor biosynthesis; coenzyme A biosynthesis; CoA from (R)-pantothenate: step 4/5. Its function is as follows. Reversibly transfers an adenylyl group from ATP to 4'-phosphopantetheine, yielding dephospho-CoA (dPCoA) and pyrophosphate. In Cupriavidus pinatubonensis (strain JMP 134 / LMG 1197) (Cupriavidus necator (strain JMP 134)), this protein is Phosphopantetheine adenylyltransferase.